The primary structure comprises 305 residues: Acetyl-coenzyme A carboxylase carboxyl transferase subunit beta (305 aa).

In terms of domain architecture, CoA carboxyltransferase N-terminal spans 23-292; it reads GWLKCTHCNE…EENEPSPPPK (270 aa). Cys27, Cys30, Cys46, and Cys49 together coordinate Zn(2+). Residues 27 to 49 form a C4-type zinc finger; sequence CTHCNELIHANELEQNSNCCPKC. The interval 281–305 is disordered; it reads FSEENEPSPPPKNLIKKTSPLKDKN.

Belongs to the AccD/PCCB family. Acetyl-CoA carboxylase is a heterohexamer composed of biotin carboxyl carrier protein (AccB), biotin carboxylase (AccC) and two subunits each of ACCase subunit alpha (AccA) and ACCase subunit beta (AccD). Zn(2+) is required as a cofactor.

Its subcellular location is the cytoplasm. The enzyme catalyses N(6)-carboxybiotinyl-L-lysyl-[protein] + acetyl-CoA = N(6)-biotinyl-L-lysyl-[protein] + malonyl-CoA. Its pathway is lipid metabolism; malonyl-CoA biosynthesis; malonyl-CoA from acetyl-CoA: step 1/1. In terms of biological role, component of the acetyl coenzyme A carboxylase (ACC) complex. Biotin carboxylase (BC) catalyzes the carboxylation of biotin on its carrier protein (BCCP) and then the CO(2) group is transferred by the transcarboxylase to acetyl-CoA to form malonyl-CoA. This chain is Acetyl-coenzyme A carboxylase carboxyl transferase subunit beta, found in Protochlamydia amoebophila (strain UWE25).